The primary structure comprises 62 residues: uncharacterized protein (62 aa).

Residues 1–62 (MTSTQNLKDK…PPKKSLSQLP (62 aa)) are disordered. Residues 7–29 (LKDKFEEEIRQQKEGKGKKEKVW) show a composition bias toward basic and acidic residues. Over residues 32–43 (HSDSSYNKQTAV) the composition is skewed to polar residues.

This is an uncharacterized protein from Dictyostelium discoideum (Social amoeba).